The chain runs to 81 residues: Trefoil factor 3 (81 aa).

Residues 1 to 22 (METRAFWTTLLLVLVAGSSCKA) form the signal peptide. The P-type domain occupies 31 to 74 (SQCMVPANVRVDCGYPTVTSEQCNNRGCCFDSSIPNVPWCFKPL). 3 cysteine pairs are disulfide-bonded: Cys33/Cys59, Cys43/Cys58, and Cys53/Cys70.

As to quaternary structure, monomer. Homodimer; disulfide-linked. Expressed in goblet cells of the intestines, and colon, in paraventricular hypothalamus and supraoptic nuclei. Weakly expressed in gastric epithelial cells (at protein level). Expressed by goblet cells of small and large intestinal epithelia, kidney and stomach. Expressed in the paraventricular hypothalamus, arcuate nucleus and amygdala of the brain. Weakly expressed in gastric epithelial cells.

The protein resides in the secreted. It is found in the extracellular space. The protein localises to the extracellular matrix. Its subcellular location is the cytoplasm. Involved in the maintenance and repair of the intestinal mucosa. Promotes the mobility of epithelial cells in healing processes (motogen). This chain is Trefoil factor 3 (Tff3), found in Rattus norvegicus (Rat).